A 168-amino-acid chain; its full sequence is Large ribosomal subunit protein uL10 (168 aa).

The protein belongs to the universal ribosomal protein uL10 family. Part of the ribosomal stalk of the 50S ribosomal subunit. The N-terminus interacts with L11 and the large rRNA to form the base of the stalk. The C-terminus forms an elongated spine to which L12 dimers bind in a sequential fashion forming a multimeric L10(L12)X complex.

Functionally, forms part of the ribosomal stalk, playing a central role in the interaction of the ribosome with GTP-bound translation factors. This is Large ribosomal subunit protein uL10 from Paracidovorax citrulli (strain AAC00-1) (Acidovorax citrulli).